The chain runs to 314 residues: Fructose-1,6-bisphosphatase class 1 (314 aa).

The Mg(2+) site is built by Glu91, Asp112, Leu114, and Asp115. Residues 115–118 (DGSS), Tyr223, and Lys254 contribute to the substrate site. Glu260 is a binding site for Mg(2+).

The protein belongs to the FBPase class 1 family. As to quaternary structure, homotetramer. Mg(2+) serves as cofactor.

It localises to the cytoplasm. The catalysed reaction is beta-D-fructose 1,6-bisphosphate + H2O = beta-D-fructose 6-phosphate + phosphate. It functions in the pathway carbohydrate biosynthesis; gluconeogenesis. The sequence is that of Fructose-1,6-bisphosphatase class 1 from Geobacter metallireducens (strain ATCC 53774 / DSM 7210 / GS-15).